Consider the following 661-residue polypeptide: Hemocyanin C chain (661 aa).

Cys-3 and Cys-557 are disulfide-bonded. Cu cation is bound by residues His-200, His-204, His-230, His-350, His-354, and His-390. N-linked (GlcNAc...) asparagine glycosylation is present at Asn-476.

The protein belongs to the tyrosinase family. Hemocyanin subfamily. As to quaternary structure, hexamer of a number of different chains, of which A, B, and C have been identified. Hemolymph.

It localises to the secreted. Its subcellular location is the extracellular space. Hemocyanins are copper-containing oxygen carriers occurring freely dissolved in the hemolymph of many mollusks and arthropods. This Panulirus interruptus (California spiny lobster) protein is Hemocyanin C chain.